Here is a 540-residue protein sequence, read N- to C-terminus: Exopolysaccharide phosphotransferase SCO6022 (540 aa).

It belongs to the stealth family.

The protein is Exopolysaccharide phosphotransferase SCO6022 of Streptomyces coelicolor (strain ATCC BAA-471 / A3(2) / M145).